Reading from the N-terminus, the 257-residue chain is MSVPLILTILAGAATFIGAFLGVLGQKPSNRLLAFSLGFAAGIMLLISLMEMLPAALAAEGMSPVLGYGMFIFGLLGYFGLDRMLPHAHPQDLMQKSVQPLPKSIKRTAILLTLGISLHNFPEGIATFVTASSNLELGFGIALAVALHNIPEGLAVAGPVYAATGSKRTAILWAGISGLAEILGGVLAWLILGSMISPVVMAAIMAAVAGIMVALSVDELMPLAKEIDPNNNPSYGVLCGMSVMGFSLVLLQTVGIG.

Helical transmembrane passes span 5–25 (LILTILAGAATFIGAFLGVLG), 32–52 (LLAFSLGFAAGIMLLISLMEM), and 61–81 (GMSPVLGYGMFIFGLLGYFGL). The Fe(2+) site is built by asparagine 120 and glutamate 123. Zn(2+) is bound by residues glutamate 123 and histidine 148. 4 helical membrane passes run 137–157 (LGFGIALAVALHNIPEGLAVA), 171–191 (ILWAGISGLAEILGGVLAWLI), 195–215 (MISPVVMAAIMAAVAGIMVAL), and 236–256 (GVLCGMSVMGFSLVLLQTVGI). Asparagine 149, glutamate 152, and glutamate 181 together coordinate Fe(2+). Residue glutamate 152 participates in Zn(2+) binding.

It belongs to the ZIP transporter (TC 2.A.5) family. ZupT subfamily.

It localises to the cell inner membrane. It catalyses the reaction Zn(2+)(in) = Zn(2+)(out). Its function is as follows. Mediates zinc uptake. May also transport other divalent cations. In Escherichia coli O81 (strain ED1a), this protein is Zinc transporter ZupT.